The following is an 87-amino-acid chain: Small ribosomal subunit protein bS20 (87 aa).

The tract at residues 1–27 is disordered; sequence MANIKSAKKRAIQSEKRRQHNASRRSM.

The protein belongs to the bacterial ribosomal protein bS20 family.

Functionally, binds directly to 16S ribosomal RNA. This Aeromonas salmonicida (strain A449) protein is Small ribosomal subunit protein bS20.